We begin with the raw amino-acid sequence, 63 residues long: Large ribosomal subunit protein bL28 (63 aa).

The protein belongs to the bacterial ribosomal protein bL28 family.

In Desulforudis audaxviator (strain MP104C), this protein is Large ribosomal subunit protein bL28.